The following is a 364-amino-acid chain: tRNA-specific 2-thiouridylase MnmA 1 (364 aa).

ATP is bound by residues Gly11–Ser18 and Phe37. Residue Cys96 is the Nucleophile of the active site. Cys96 and Cys193 form a disulfide bridge. Position 120 (Gly120) interacts with ATP. Positions Lys142–Gln144 are interaction with tRNA. Cys193 functions as the Cysteine persulfide intermediate in the catalytic mechanism. The interval Arg309–Tyr310 is interaction with tRNA.

This sequence belongs to the MnmA/TRMU family.

The protein resides in the cytoplasm. The catalysed reaction is S-sulfanyl-L-cysteinyl-[protein] + uridine(34) in tRNA + AH2 + ATP = 2-thiouridine(34) in tRNA + L-cysteinyl-[protein] + A + AMP + diphosphate + H(+). Functionally, catalyzes the 2-thiolation of uridine at the wobble position (U34) of tRNA, leading to the formation of s(2)U34. This chain is tRNA-specific 2-thiouridylase MnmA 1, found in Bacteroides fragilis (strain ATCC 25285 / DSM 2151 / CCUG 4856 / JCM 11019 / LMG 10263 / NCTC 9343 / Onslow / VPI 2553 / EN-2).